The chain runs to 229 residues: Enolase-phosphatase E1 (229 aa).

Belongs to the HAD-like hydrolase superfamily. MasA/MtnC family. Monomer. Requires Mg(2+) as cofactor.

The enzyme catalyses 5-methylsulfanyl-2,3-dioxopentyl phosphate + H2O = 1,2-dihydroxy-5-(methylsulfanyl)pent-1-en-3-one + phosphate. It participates in amino-acid biosynthesis; L-methionine biosynthesis via salvage pathway; L-methionine from S-methyl-5-thio-alpha-D-ribose 1-phosphate: step 3/6. Its pathway is amino-acid biosynthesis; L-methionine biosynthesis via salvage pathway; L-methionine from S-methyl-5-thio-alpha-D-ribose 1-phosphate: step 4/6. Its function is as follows. Bifunctional enzyme that catalyzes the enolization of 2,3-diketo-5-methylthiopentyl-1-phosphate (DK-MTP-1-P) into the intermediate 2-hydroxy-3-keto-5-methylthiopentenyl-1-phosphate (HK-MTPenyl-1-P), which is then dephosphorylated to form the acireductone 1,2-dihydroxy-3-keto-5-methylthiopentene (DHK-MTPene). In Pectobacterium atrosepticum (strain SCRI 1043 / ATCC BAA-672) (Erwinia carotovora subsp. atroseptica), this protein is Enolase-phosphatase E1.